Here is a 402-residue protein sequence, read N- to C-terminus: Cysteine-rich venom protein (402 aa).

The signal sequence occupies residues 1–13; the sequence is MNLALFIIFATIF. In terms of domain architecture, SCP spans 57-199; the sequence is LETHNQLRNK…VKKVLYTCNY (143 aa).

Belongs to the CRISP family. Post-translationally, contains 7 disulfide bonds. As to expression, expressed by the venom gland.

Its subcellular location is the secreted. The chain is Cysteine-rich venom protein from Tityus serrulatus (Brazilian scorpion).